A 383-amino-acid chain; its full sequence is Lipid-A-disaccharide synthase (383 aa).

It belongs to the LpxB family.

The enzyme catalyses a lipid X + a UDP-2-N,3-O-bis[(3R)-3-hydroxyacyl]-alpha-D-glucosamine = a lipid A disaccharide + UDP + H(+). It participates in bacterial outer membrane biogenesis; LPS lipid A biosynthesis. Condensation of UDP-2,3-diacylglucosamine and 2,3-diacylglucosamine-1-phosphate to form lipid A disaccharide, a precursor of lipid A, a phosphorylated glycolipid that anchors the lipopolysaccharide to the outer membrane of the cell. This chain is Lipid-A-disaccharide synthase, found in Aliivibrio fischeri (strain ATCC 700601 / ES114) (Vibrio fischeri).